The primary structure comprises 148 residues: Deoxyuridine 5'-triphosphate nucleotidohydrolase (148 aa).

Residues 68–70 (RSG), N81, 85–87 (TVD), and K95 each bind substrate.

The protein belongs to the dUTPase family. Mg(2+) is required as a cofactor.

The catalysed reaction is dUTP + H2O = dUMP + diphosphate + H(+). It participates in pyrimidine metabolism; dUMP biosynthesis; dUMP from dCTP (dUTP route): step 2/2. This enzyme is involved in nucleotide metabolism: it produces dUMP, the immediate precursor of thymidine nucleotides and it decreases the intracellular concentration of dUTP so that uracil cannot be incorporated into DNA. In Caldanaerobacter subterraneus subsp. tengcongensis (strain DSM 15242 / JCM 11007 / NBRC 100824 / MB4) (Thermoanaerobacter tengcongensis), this protein is Deoxyuridine 5'-triphosphate nucleotidohydrolase.